A 162-amino-acid polypeptide reads, in one-letter code: SsrA-binding protein (162 aa).

The disordered stretch occupies residues Glu140–Arg162.

The protein belongs to the SmpB family.

The protein resides in the cytoplasm. Its function is as follows. Required for rescue of stalled ribosomes mediated by trans-translation. Binds to transfer-messenger RNA (tmRNA), required for stable association of tmRNA with ribosomes. tmRNA and SmpB together mimic tRNA shape, replacing the anticodon stem-loop with SmpB. tmRNA is encoded by the ssrA gene; the 2 termini fold to resemble tRNA(Ala) and it encodes a 'tag peptide', a short internal open reading frame. During trans-translation Ala-aminoacylated tmRNA acts like a tRNA, entering the A-site of stalled ribosomes, displacing the stalled mRNA. The ribosome then switches to translate the ORF on the tmRNA; the nascent peptide is terminated with the 'tag peptide' encoded by the tmRNA and targeted for degradation. The ribosome is freed to recommence translation, which seems to be the essential function of trans-translation. The protein is SsrA-binding protein of Myxococcus xanthus (strain DK1622).